The primary structure comprises 199 residues: Probable GTP-binding protein EngB (199 aa).

In terms of domain architecture, EngB-type G spans Asp28–Val199. GTP contacts are provided by residues Gly36–Ser43, Gly63–Leu67, Asp81–Gly84, Thr148–Asp151, and Phe180–Ser182. The Mg(2+) site is built by Ser43 and Thr65.

This sequence belongs to the TRAFAC class TrmE-Era-EngA-EngB-Septin-like GTPase superfamily. EngB GTPase family. Mg(2+) serves as cofactor.

In terms of biological role, necessary for normal cell division and for the maintenance of normal septation. The polypeptide is Probable GTP-binding protein EngB (Streptococcus pyogenes serotype M28 (strain MGAS6180)).